We begin with the raw amino-acid sequence, 250 residues long: ATP synthase subunit a (250 aa).

5 helical membrane passes run 27 to 47 (TDTV…AFYL), 86 to 106 (FVLP…WLAV), 129 to 149 (INYV…AGIW), 191 to 211 (IFAG…IMWA), and 219 to 239 (FDLF…ILYF).

The protein belongs to the ATPase A chain family. As to quaternary structure, F-type ATPases have 2 components, CF(1) - the catalytic core - and CF(0) - the membrane proton channel. CF(1) has five subunits: alpha(3), beta(3), gamma(1), delta(1), epsilon(1). CF(0) has three main subunits: a(1), b(2) and c(9-12). The alpha and beta chains form an alternating ring which encloses part of the gamma chain. CF(1) is attached to CF(0) by a central stalk formed by the gamma and epsilon chains, while a peripheral stalk is formed by the delta and b chains.

It localises to the cell membrane. In terms of biological role, key component of the proton channel; it plays a direct role in the translocation of protons across the membrane. This chain is ATP synthase subunit a, found in Mycobacterium bovis (strain ATCC BAA-935 / AF2122/97).